Reading from the N-terminus, the 1655-residue chain is Protein scribble homolog (1655 aa).

A sufficient for targeting to adherens junction and to inhibit cell proliferation region spans residues 1 to 818 (MLKCIPLWRC…MRVWRERMVE (818 aa)). Serine 37 is subject to Phosphoserine. LRR repeat units lie at residues 37-58 (SLEELLLDANQLRELPKPFFRL), 60-81 (NLRKLGLSDNEIQRLPPEVANF), 83-104 (QLVELDVSRNDIPEIPESIKFC), 106-127 (ALEIADFSGNPLSRLPDGFTQL), 129-150 (SLAHLALNDVSLQALPGDVGNL), 152-174 (NLVTLELRENLLKSLPASLSFLV), 175-197 (KLEQLDLGGNDLEVLPDTLGALP), 198-219 (NLRELWLDRNQLSALPPELGNL), 221-243 (RLVCLDVSENRLEELPAELGGLV), 244-265 (LLTDLLLSQNLLRRLPDGIGQL), 267-288 (QLSILKVDQNRLCEVTEAIGDC), 290-312 (NLSELILTENLLMALPRSLGKLT), 313-334 (KLTNLNVDRNHLEALPPEIGGC), 336-357 (ALSVLSLRDNRLAVLPPELAHT), 359-381 (ELHVLDVAGNRLQSLPFALTHLN), and 382-402 (LKALWLAENQAQPMLRFQTED). Position 378 is a phosphothreonine (threonine 378). 3 disordered regions span residues 417 to 440 (PQQPPPSLEDAGQQGSLSETWSDA), 459 to 606 (DAEE…IRKD), and 628 to 702 (LLQG…VSAP). Residues 458–474 (EDAEEAAAEKRGLQRRA) adopt a coiled-coil conformation. At threonine 475 the chain carries Phosphothreonine. Residues 479-494 (SELKVMKRSIEGRRSE) are compositionally biased toward basic and acidic residues. At serine 504 the chain carries Phosphoserine. The span at 537–555 (EGPSAEAQGGSQQEATTAG) shows a compositional bias: low complexity. Acidic residues-rich tracts occupy residues 556–565 (GEEDAEEDYQ) and 660–694 (EEEEEEEGSPQEEEEEEEEENRAEEEEASTEEEDK). A coiled-coil region spans residues 656–701 (RAQKEEEEEEEGSPQEEEEEEEEENRAEEEEASTEEEDKEGAVVSA). A Phosphoserine modification is found at serine 688. Position 689 is a phosphothreonine (threonine 689). Serine 708 and serine 764 each carry phosphoserine. Residues 717–1229 (IEPARIEEEE…SLESISSIDR (513 aa)) form an interaction with ARHGEF7 region. Residues 728–815 (TLTILRQTGG…AVQMRVWRER (88 aa)) form the PDZ 1 domain. Residues 728-1194 (TLTILRQTGG…TVLVCDGFEA (467 aa)) form a required for interaction with VIM region. A Phosphothreonine modification is found at threonine 826. Residues 827 to 853 (PLRPEDDYSPRERRGGGLRLPLLPPES) form a disordered region. Positions 829-841 (RPEDDYSPRERRG) are enriched in basic and acidic residues. Phosphoserine is present on residues serine 835, serine 853, serine 875, and serine 939. PDZ domains follow at residues 862–950 (VACL…EREA), 1004–1093 (EIRL…RRDP), and 1100–1194 (ELCI…GFEA). Residues 1105–1117 (KAPGERLGISIRG) are interaction with tick-borne encephalitis virus RNA-directed RNA polymerase NS5. Residues serine 1140, serine 1220, serine 1223, serine 1226, serine 1232, serine 1276, serine 1279, serine 1295, serine 1298, serine 1306, and serine 1309 each carry the phosphoserine modification. The span at 1227 to 1242 (IDRELSPEGPGKEKEL) shows a compositional bias: basic and acidic residues. The interval 1227–1246 (IDRELSPEGPGKEKELPGQT) is disordered. The segment at 1277–1489 (AGSVQRVPSG…APERALSPAE (213 aa)) is disordered. Positions 1302–1311 (QQPPSPPSPD) are enriched in pro residues. The residue at position 1342 (threonine 1342) is a Phosphothreonine. Serine 1348 is modified (phosphoserine). Residues 1353–1365 (SFRERQKYFELEV) are compositionally biased toward basic and acidic residues. Serine 1378 carries the post-translational modification Phosphoserine. Positions 1379–1419 (LVGADDLRKMQEEEARKLQQKRAQMLREAAEAGAEARLALD) form a coiled coil. Residues 1383 to 1395 (DDLRKMQEEEARK) are compositionally biased toward basic and acidic residues. Residues 1409–1421 (EAGAEARLALDGE) are compositionally biased toward low complexity. A compositionally biased stretch (acidic residues) spans 1422 to 1432 (TLGEEEQEDEQ). Residues serine 1437, serine 1445, and serine 1448 each carry the phosphoserine modification. The segment covering 1461–1472 (AKAERRHQERLR) has biased composition (basic and acidic residues). A phosphoserine mark is found at serine 1475, serine 1486, and serine 1508. A disordered region spans residues 1520 to 1568 (LSRSQEGRGTRGPLERLAEAPSPAPTPSPTPVEDLGPQTSTSPGRLPLS). The span at 1524 to 1537 (QEGRGTRGPLERLA) shows a compositional bias: basic and acidic residues. Position 1541 is a phosphoserine (serine 1541). The residue at position 1545 (threonine 1545) is a Phosphothreonine. Residues serine 1547, serine 1561, and serine 1591 each carry the phosphoserine modification. Residues 1622 to 1655 (GRPSPGAVGPEDVALCSSRRPVRPGRRGLGPVPS) form a disordered region.

This sequence belongs to the LAP (LRR and PDZ) protein family. As to quaternary structure, interacts with UBE3A. Interacts with PAK1 and PAK2. Interacts (via PDZ domains) with VANGL2. Interacts (via PDZ domains) with LPP and TRIP6; the interaction is direct. Interacts (via PDZ domains) with TJP2. Interacts (via PDZ domains) with APC; may mediate APC targeting to adherens junctions of epithelial cells. Interacts (via PDZ domains) with TSHR; regulates TSHR trafficking and function. Interacts with ARHGEF7 and GIT1; interacts directly with ARHGEF7. Interacts with CTNNB1. Interacts with MAPK12. Interacts (via PDZ domains 1 and 3) with MCC. Interacts with DLG5. Interacts with STK4/MST1 and LATS1 in the presence of DLG5. Interacts (via PDZ domain 3) with CRTAM (via PDZ-binding motif); the interaction promotes CRTAM and SCRIB polarization in a subset of CD4+ T-cells. Interacts with YES1, when YES1 is in a closed conformation; the interaction facilitates YES1 autophosphorylation. Interacts (via PDZ domains) with VIM; the interaction protects SCRIB from proteasomal degradation and facilitates SCRIB localization to intermediate filaments, the interaction is reduced by cell contact inhibition. In terms of assembly, (Microbial infection) Interacts (via fourth PDZ domain) with tick-borne encephalitis virus RNA-directed RNA polymerase NS5; this interaction targets viral NS5 to the cell membrane periphery and nucleus and prevents STAT1 phosphorylation, and thus, the activation of the JAK-STAT signaling pathway. Interacts with HPV E6. Interacts with influenza A virus protein NS1; the interaction results in the translocation of SCRIB from the cell membrane to perinuclear puncta. Post-translationally, ubiquitinated; targeted for UBE3A-dependent multiubiquitination in the presence of high-risk HPV E6 proteins and degraded. Palmitoylated. Could be depalmitoylated by LYPLA1 and/or LYPLA2. Palmitoylation of SCRIB by ZDHHC7 is required for its localization to cell-cell junctions, function in the establishement of epithelial cell polarity and the regulation of downstream signaling pathways important for epithelial cell differentiation. Expressed in kidney, skeletal muscles, liver, lung, breast, intestine, placenta and skin mainly in epithelial cells (at protein level).

The protein localises to the cell membrane. It localises to the cell junction. The protein resides in the adherens junction. It is found in the cell projection. Its subcellular location is the lamellipodium. The protein localises to the cytoplasm. It localises to the postsynapse. The protein resides in the presynapse. In terms of biological role, scaffold protein involved in different aspects of polarized cell differentiation regulating epithelial and neuronal morphogenesis and T-cell polarization. Via its interaction with CRTAM, required for the late phase polarization of a subset of CD4+ T-cells, which in turn regulates TCR-mediated proliferation and IFNG and IL22 production. Plays a role in cell directional movement, cell orientation, cell sheet organization and Golgi complex polarization at the cell migration front. Promotes epithelial cell layer barrier function via maintaining cell-cell adhesion. Most probably functions in the establishment of apico-basal cell polarity. May function in cell proliferation regulating progression from G1 to S phase and as a positive regulator of apoptosis for instance during acinar morphogenesis of the mammary epithelium. May regulate cell invasion via MAPK-mediated cell migration and adhesion. May play a role in exocytosis and in the targeting of synaptic vesicles to synapses. Functions as an activator of Rac GTPase activity. The polypeptide is Protein scribble homolog (Homo sapiens (Human)).